Consider the following 437-residue polypeptide: Epsilon-sarcoglycan (437 aa).

The Extracellular portion of the chain corresponds to 1–317; that stretch reads MQLPRWWELG…LKSRDYYTDF (317 aa). A glycan (N-linked (GlcNAc...) asparagine) is linked at asparagine 200. Residues 318-338 form a helical membrane-spanning segment; it reads LITLAVPSAVALVLFLILAYI. At 339-437 the chain is on the cytoplasmic side; the sequence is MCCRREGVEK…QQQTTGKWYP (99 aa).

The protein belongs to the sarcoglycan alpha/epsilon family. In terms of processing, N-glycosylated. Ubiquitinated, leading to its degradation by the proteasome.

The protein resides in the cell membrane. Its subcellular location is the sarcolemma. It localises to the cytoplasm. The protein localises to the cytoskeleton. It is found in the cell projection. The protein resides in the dendrite. Its subcellular location is the golgi apparatus. Component of the sarcoglycan complex, a subcomplex of the dystrophin-glycoprotein complex which forms a link between the F-actin cytoskeleton and the extracellular matrix. This chain is Epsilon-sarcoglycan, found in Macaca fascicularis (Crab-eating macaque).